The sequence spans 148 residues: NADPH-dependent 7-cyano-7-deazaguanine reductase (148 aa).

C50 acts as the Thioimide intermediate in catalysis. Residue D57 is the Proton donor of the active site. Substrate contacts are provided by residues 72 to 74 and 91 to 92; these read VES and HE.

It belongs to the GTP cyclohydrolase I family. QueF type 1 subfamily.

The protein localises to the cytoplasm. It carries out the reaction 7-aminomethyl-7-carbaguanine + 2 NADP(+) = 7-cyano-7-deazaguanine + 2 NADPH + 3 H(+). The protein operates within tRNA modification; tRNA-queuosine biosynthesis. Catalyzes the NADPH-dependent reduction of 7-cyano-7-deazaguanine (preQ0) to 7-aminomethyl-7-deazaguanine (preQ1). The protein is NADPH-dependent 7-cyano-7-deazaguanine reductase of Helicobacter pylori (strain P12).